A 354-amino-acid chain; its full sequence is Thiamine thiazole synthase 1, chloroplastic (354 aa).

Residues 1–45 constitute a chloroplast transit peptide; it reads MATAAASSLLKSSFAGSRLPAATRTTPASLVVATGPRGAGAGPIC. Residues Ala100, 120–121, Gly128, and Val193 contribute to the substrate site; that span reads EQ. Residue Cys222 is modified to 2,3-didehydroalanine (Cys). Substrate contacts are provided by residues Asp224, His239, Met291, and 301-303; that span reads RMG.

Belongs to the THI4 family. As to quaternary structure, homooctamer. The cofactor is Fe cation. Post-translationally, during the catalytic reaction, a sulfide is transferred from Cys-222 to a reaction intermediate, generating a dehydroalanine residue. In terms of tissue distribution, highest expression in developing embryos and green leaves and a very low level expression seen in endosperm, roots, etiolated shoots and immature ears.

The protein localises to the plastid. It is found in the chloroplast. It carries out the reaction [ADP-thiazole synthase]-L-cysteine + glycine + NAD(+) = [ADP-thiazole synthase]-dehydroalanine + ADP-5-ethyl-4-methylthiazole-2-carboxylate + nicotinamide + 3 H2O + 2 H(+). Its function is as follows. Involved in biosynthesis of the thiamine precursor thiazole. Catalyzes the conversion of NAD and glycine to adenosine diphosphate 5-(2-hydroxyethyl)-4-methylthiazole-2-carboxylic acid (ADT), an adenylated thiazole intermediate. The reaction includes an iron-dependent sulfide transfer from a conserved cysteine residue of the protein to a thiazole intermediate. The enzyme can only undergo a single turnover, which suggests it is a suicide enzyme. May have additional roles in adaptation to various stress conditions and in DNA damage tolerance. The polypeptide is Thiamine thiazole synthase 1, chloroplastic (Zea mays (Maize)).